Here is a 463-residue protein sequence, read N- to C-terminus: L-seryl-tRNA(Sec) selenium transferase (463 aa).

Position 295 is an N6-(pyridoxal phosphate)lysine (lysine 295).

The protein belongs to the SelA family. Homodecamer; pentamer of dimers. Binds only one seryl-tRNA(Sec) per dimer. It depends on pyridoxal 5'-phosphate as a cofactor.

It is found in the cytoplasm. It catalyses the reaction L-seryl-tRNA(Sec) + selenophosphate + H(+) = L-selenocysteinyl-tRNA(Sec) + phosphate. Its pathway is aminoacyl-tRNA biosynthesis; selenocysteinyl-tRNA(Sec) biosynthesis; selenocysteinyl-tRNA(Sec) from L-seryl-tRNA(Sec) (bacterial route): step 1/1. Its function is as follows. Converts seryl-tRNA(Sec) to selenocysteinyl-tRNA(Sec) required for selenoprotein biosynthesis. In Serratia proteamaculans (strain 568), this protein is L-seryl-tRNA(Sec) selenium transferase.